The primary structure comprises 203 residues: A-type ATP synthase subunit E (203 aa).

The protein belongs to the V-ATPase E subunit family. As to quaternary structure, has multiple subunits with at least A(3), B(3), C, D, E, F, H, I and proteolipid K(x).

It is found in the cell membrane. Its function is as follows. Component of the A-type ATP synthase that produces ATP from ADP in the presence of a proton gradient across the membrane. The protein is A-type ATP synthase subunit E of Methanococcus maripaludis (strain C7 / ATCC BAA-1331).